We begin with the raw amino-acid sequence, 37 residues long: Potassium channel toxin alpha-KTx 1.4 (37 aa).

3 disulfides stabilise this stretch: cysteine 7/cysteine 28, cysteine 13/cysteine 33, and cysteine 17/cysteine 35.

The protein belongs to the short scorpion toxin superfamily. Potassium channel inhibitor family. Alpha-KTx 01 subfamily. As to expression, expressed by the venom gland.

The protein localises to the secreted. Blocks selectively the high conductance calcium-activated (maxi-K) potassium channels. This Centruroides limbatus (Bark scorpion) protein is Potassium channel toxin alpha-KTx 1.4.